The following is a 267-amino-acid chain: GTP cyclohydrolase FolE2 (267 aa).

It belongs to the GTP cyclohydrolase IV family.

It catalyses the reaction GTP + H2O = 7,8-dihydroneopterin 3'-triphosphate + formate + H(+). The protein operates within cofactor biosynthesis; 7,8-dihydroneopterin triphosphate biosynthesis; 7,8-dihydroneopterin triphosphate from GTP: step 1/1. Converts GTP to 7,8-dihydroneopterin triphosphate. In Geobacter sp. (strain M21), this protein is GTP cyclohydrolase FolE2.